A 299-amino-acid polypeptide reads, in one-letter code: ATP phosphoribosyltransferase (299 aa).

Belongs to the ATP phosphoribosyltransferase family. Long subfamily. In terms of assembly, equilibrium between an active dimeric form, an inactive hexameric form and higher aggregates. Interconversion between the various forms is largely reversible and is influenced by the natural substrates and inhibitors of the enzyme. Requires Mg(2+) as cofactor.

It localises to the cytoplasm. It carries out the reaction 1-(5-phospho-beta-D-ribosyl)-ATP + diphosphate = 5-phospho-alpha-D-ribose 1-diphosphate + ATP. It functions in the pathway amino-acid biosynthesis; L-histidine biosynthesis; L-histidine from 5-phospho-alpha-D-ribose 1-diphosphate: step 1/9. With respect to regulation, feedback inhibited by histidine. Its function is as follows. Catalyzes the condensation of ATP and 5-phosphoribose 1-diphosphate to form N'-(5'-phosphoribosyl)-ATP (PR-ATP). Has a crucial role in the pathway because the rate of histidine biosynthesis seems to be controlled primarily by regulation of HisG enzymatic activity. This chain is ATP phosphoribosyltransferase, found in Yersinia pseudotuberculosis serotype O:1b (strain IP 31758).